The primary structure comprises 697 residues: Tryptophan synthase (697 aa).

Residues 1–298 are tryptophan synthase alpha chain; the sequence is MTEQIKKTFL…AVVEPINEMY (298 aa). Catalysis depends on proton acceptor residues E50 and D61. The tract at residues 298-697 is tryptophan synthase beta chain; that stretch reads YLPQKYGMFG…GPKIGWDLRF (400 aa). K381 is subject to N6-(pyridoxal phosphate)lysine.

It in the N-terminal section; belongs to the TrpA family. The protein in the C-terminal section; belongs to the TrpB family. It depends on pyridoxal 5'-phosphate as a cofactor.

It catalyses the reaction (1S,2R)-1-C-(indol-3-yl)glycerol 3-phosphate + L-serine = D-glyceraldehyde 3-phosphate + L-tryptophan + H2O. It functions in the pathway amino-acid biosynthesis; L-tryptophan biosynthesis; L-tryptophan from chorismate: step 5/5. This is Tryptophan synthase (trp2) from Schizosaccharomyces pombe (strain 972 / ATCC 24843) (Fission yeast).